The chain runs to 77 residues: UPF0291 protein Bsph_1689 (77 aa).

It belongs to the UPF0291 family.

The protein localises to the cytoplasm. This Lysinibacillus sphaericus (strain C3-41) protein is UPF0291 protein Bsph_1689.